The sequence spans 451 residues: Tubulin beta-4 chain (451 aa).

Residues Gln-11, Glu-69, Ser-138, Gly-142, Thr-143, Gly-144, Asn-204, and Asn-226 each contribute to the GTP site. A Mg(2+)-binding site is contributed by Glu-69. Residues 417 to 427 (DLVSEYQQYQD) show a composition bias toward polar residues. The segment at 417–451 (DLVSEYQQYQDATAEEEGEYDEDDGGYGDEDDGMM) is disordered. Residues 429-451 (TAEEEGEYDEDDGGYGDEDDGMM) show a composition bias toward acidic residues.

This sequence belongs to the tubulin family. Dimer of alpha and beta chains. A typical microtubule is a hollow water-filled tube with an outer diameter of 25 nm and an inner diameter of 15 nM. Alpha-beta heterodimers associate head-to-tail to form protofilaments running lengthwise along the microtubule wall with the beta-tubulin subunit facing the microtubule plus end conferring a structural polarity. Microtubules usually have 13 protofilaments but different protofilament numbers can be found in some organisms and specialized cells. The cofactor is Mg(2+).

Its subcellular location is the cytoplasm. It is found in the cytoskeleton. Functionally, tubulin is the major constituent of microtubules, a cylinder consisting of laterally associated linear protofilaments composed of alpha- and beta-tubulin heterodimers. Microtubules grow by the addition of GTP-tubulin dimers to the microtubule end, where a stabilizing cap forms. Below the cap, tubulin dimers are in GDP-bound state, owing to GTPase activity of alpha-tubulin. The chain is Tubulin beta-4 chain (TUBB4) from Oomycete-like sp. (strain MacKay2000).